A 355-amino-acid polypeptide reads, in one-letter code: uncharacterized protein (355 aa).

132-139 (GPPGCGKT) provides a ligand contact to ATP.

It belongs to the AAA ATPase family.

The protein localises to the mitochondrion. This is an uncharacterized protein from Schizosaccharomyces pombe (strain 972 / ATCC 24843) (Fission yeast).